A 201-amino-acid chain; its full sequence is Sterile alpha motif domain-containing protein 12 (201 aa).

One can recognise an SAM domain in the interval tryptophan 77 to arginine 143.

This Pongo abelii (Sumatran orangutan) protein is Sterile alpha motif domain-containing protein 12 (SAMD12).